The chain runs to 402 residues: Flavohemoprotein (402 aa).

A Globin domain is found at 1–136 (MLSEKTIEIV…IADAFISIEA (136 aa)). A heme b-binding site is contributed by His85. Residues Tyr95 and Glu135 each act as charge relay system in the active site. A reductase region spans residues 147–402 (GGWKDFRNFV…EFFGPAASLQ (256 aa)). Residues 150–260 (KDFRNFVVVK…SAPAGDFVLN (111 aa)) form the FAD-binding FR-type domain. Residues Tyr188 and 204-207 (RQYS) contribute to the FAD site. 273–278 (GVGITP) contributes to the NADP(+) binding site. 394–397 (FFGP) provides a ligand contact to FAD.

It belongs to the globin family. Two-domain flavohemoproteins subfamily. The protein in the C-terminal section; belongs to the flavoprotein pyridine nucleotide cytochrome reductase family. Requires heme b as cofactor. It depends on FAD as a cofactor.

It catalyses the reaction 2 nitric oxide + NADPH + 2 O2 = 2 nitrate + NADP(+) + H(+). It carries out the reaction 2 nitric oxide + NADH + 2 O2 = 2 nitrate + NAD(+) + H(+). Is involved in NO detoxification in an aerobic process, termed nitric oxide dioxygenase (NOD) reaction that utilizes O(2) and NAD(P)H to convert NO to nitrate, which protects the bacterium from various noxious nitrogen compounds. Therefore, plays a central role in the inducible response to nitrosative stress. The sequence is that of Flavohemoprotein from Bacillus anthracis.